A 771-amino-acid polypeptide reads, in one-letter code: Transcription factor Sp3 (771 aa).

2 disordered regions span residues 1–47 (MTAP…QDAQ) and 60–79 (KIGP…ASHS). A compositionally biased stretch (low complexity) spans 34–47 (ASASAAAAAPQDAQ). Residue lysine 109 forms a Glycyl lysine isopeptide (Lys-Gly) (interchain with G-Cter in SUMO) linkage. Transactivation domain (Gln-rich) stretches follow at residues 129–228 (QYVL…VQVQ) and 341–489 (EQNA…TLGQ). A 9aaTAD motif is present at residues 451–459 (ITWQTFQVQ). Residues 524-610 (IQLHQGENAG…RGSNLGKKKQ (87 aa)) are repressor domain. N6-acetyllysine; alternate is present on lysine 541. Lysine 541 is covalently cross-linked (Glycyl lysine isopeptide (Lys-Gly) (interchain with G-Cter in SUMO); alternate). 3 consecutive C2H2-type zinc fingers follow at residues 611 to 635 (HICH…LRWH), 641 to 665 (FVCN…RRTH), and 671 to 693 (FVCP…IKTH).

The protein belongs to the Sp1 C2H2-type zinc-finger protein family. In terms of assembly, interacts with HDAC1 and HDAC2; the interaction deacetylates SP3 and regulates its transcriptional activity. Interacts with v-Jun. Acetylated by histone acetyltransferase p300, deacetylated by HDACs. Acetylation/deacetylation states regulate transcriptional activity. Acetylation appears to activate transcription. Alternate sumoylation and acetylation at Lys-541 also control transcriptional activity. In terms of processing, sumoylation represses transcriptional activity. Lys-541 is the major site. Sumoylation at this site promotes nuclear localization to the nuclear periphery, nuclear dots and PML nuclear bodies. Alternate sumoylation and acetylation at Lys-541 also control transcriptional activity.

The protein localises to the nucleus. It localises to the PML body. Functionally, transcriptional factor that can act as an activator or repressor depending on post-translational modifications. Binds to GT and GC boxes promoter elements. Competes with SP1 for the GC-box promoters. Weak activator of transcription. Required for activation of SPARC transcription. In Gallus gallus (Chicken), this protein is Transcription factor Sp3 (SP3).